The sequence spans 167 residues: Ribosome maturation factor RimP (167 aa).

Belongs to the RimP family.

Its subcellular location is the cytoplasm. Required for maturation of 30S ribosomal subunits. This Cytophaga hutchinsonii (strain ATCC 33406 / DSM 1761 / CIP 103989 / NBRC 15051 / NCIMB 9469 / D465) protein is Ribosome maturation factor RimP.